A 249-amino-acid polypeptide reads, in one-letter code: Tumor necrosis factor ligand superfamily member 12 (249 aa).

The Cytoplasmic segment spans residues 1-21; sequence MAARRSQRRRGRRGEPGTALL. Residues 22–45 traverse the membrane as a helical; Signal-anchor for type II membrane protein segment; the sequence is APLVLSLGLALACLGLLLVVVSLG. Residues 46-249 are Extracellular-facing; sequence SWATLSAQEP…LTYFGLFQVH (204 aa). Positions 52–78 are disordered; that stretch reads AQEPSQEELTAEDRREPPELNPQTEES. Residues 107 to 248 form the THD domain; the sequence is IAAHYEVHPR…FLTYFGLFQV (142 aa). Asparagine 139 is a glycosylation site (N-linked (GlcNAc...) asparagine). Cysteine 191 and cysteine 210 are joined by a disulfide.

The protein belongs to the tumor necrosis factor family. In terms of assembly, homotrimer. Interacts with the angiogenic factor AGGF1/VG5Q. Post-translationally, the soluble form is produced from the membrane form by proteolytic processing. Widely expressed.

Its subcellular location is the cell membrane. It is found in the secreted. Its function is as follows. Binds to FN14 and possibly also to TNRFSF12/APO3. Weak inducer of apoptosis in some cell types. Mediates NF-kappa-B activation. Promotes angiogenesis and the proliferation of endothelial cells. Also involved in induction of inflammatory cytokines. Promotes IL8 secretion. In Mus musculus (Mouse), this protein is Tumor necrosis factor ligand superfamily member 12 (Tnfsf12).